The sequence spans 282 residues: Gap junction Cx32.7 protein (282 aa).

Residues 2 to 13 (GEWDLLGRLLDK) are Cytoplasmic-facing. Residues 14-36 (VQSHSTVIGKVWLTVLFVFRILV) form a helical membrane-spanning segment. At 37-76 (LRTGADRVWGDEQSDFVCNTQQPGCENVCYDLAFPISHVR) the chain is on the extracellular side. The helical transmembrane segment at 77–99 (FWFLQIIAVATPKLLYLGHVLHV) threads the bilayer. Residues 100-148 (IHAEKKMKERMKKQAELDDQTNLFLRKAYKVPKYTKSSGKISIRGRLLR) lie on the Cytoplasmic side of the membrane. The helical transmembrane segment at 149–171 (SYVYHLVAKIILEVLFIVGQYFL) threads the bilayer. Residues 172 to 203 (YGFTLDTRYVCTRFPCPHKVDCFLSRPTEKSV) lie on the Extracellular side of the membrane. A helical transmembrane segment spans residues 204–226 (IIWFMLVAAFVSLFLSLVELFYL). The Cytoplasmic portion of the chain corresponds to 227–282 (CVKAAKECMARRQDYTVTPVTPPLLARKSFKSHKEVFQNCVNEPASPENNMEEVHI).

It belongs to the connexin family. Alpha-type (group II) subfamily. In terms of assembly, a connexon is composed of a hexamer of connexins. In terms of tissue distribution, expressed equally in incompetent and competent ovaries.

The protein resides in the cell membrane. It localises to the cell junction. Its subcellular location is the gap junction. Functionally, one gap junction consists of a cluster of closely packed pairs of transmembrane channels, the connexons, through which materials of low MW diffuse from one cell to a neighboring cell. This chain is Gap junction Cx32.7 protein, found in Micropogonias undulatus (Atlantic croaker).